A 904-amino-acid chain; its full sequence is Polycystin-2 (904 aa).

Residues 1 to 102 form a disordered region; that stretch reads MSSSRVRPQA…SSSGGVPGNF (102 aa). Residues 1–155 lie on the Cytoplasmic side of the membrane; the sequence is MSSSRVRPQA…NSNREMYLKT (155 aa). Low complexity predominate over residues 8–20; that stretch reads PQAPQSPAASASA. The segment covering 26 to 38 has biased composition (basic and acidic residues); sequence EGIEMEKMHHEEV. The segment covering 86-96 has biased composition (low complexity); it reads SVSTTSSSSSG. A helical membrane pass occupies residues 156–177; it reads VLREMITYILFLLTLCIITYGM. Residues 178 to 404 are Extracellular-facing; that stretch reads VSTNMYYYTK…TVRLLRYVSS (227 aa). N235, N241, and N264 each carry an N-linked (GlcNAc...) asparagine glycan. Residues C267 and C280 are joined by a disulfide bond. N-linked (GlcNAc...) asparagine glycosylation occurs at N298. Residues 405–425 form a helical membrane-spanning segment; sequence WDYFVGMCEVSFCLFVLYYLV. Residues 426–441 are Cytoplasmic-facing; sequence EEALEIRLHRLRYFKS. The helical transmembrane segment at 442–462 threads the bilayer; that stretch reads LWNCLDVLIVALSVPAIIMNI. Residues 463 to 489 are Extracellular-facing; the sequence is CRTSAVSHRLHFLLENHSTYPNFEPLA. N478 is a glycosylation site (N-linked (GlcNAc...) asparagine). The helical transmembrane segment at 490–510 threads the bilayer; it reads RLQVHFNNLAAIIVFLSWVKL. Topologically, residues 511–534 are cytoplasmic; that stretch reads FKFINFNKTMNQLSTTMSRCAKDL. The chain crosses the membrane as a helical span at residues 535–556; sequence MGFAIMFFIVFLAYAQLAYLVF. The Extracellular portion of the chain corresponds to 557-568; the sequence is GTQVNDFSTFQA. The pore-forming intramembrane region spans 569 to 583; the sequence is CIFTQFRIILGDFDF. Ca(2+) is bound at residue L578. Positions 578-580 match the Selectivity filter motif; that stretch reads LGD. Topologically, residues 584 to 591 are extracellular; that stretch reads SEIEEADS. The helical transmembrane segment at 592 to 612 threads the bilayer; the sequence is VLGPIYFTTFVFFIFMILLNM. At 613-904 the chain is on the cytoplasmic side; the sequence is FLAIINDTYS…DAAASGPAHL (292 aa). One can recognise an EF-hand 1 domain in the interval 687 to 722; that stretch reads HSDAEIEAIFAKYDLDGDQELTEHEHQQMRDDLEKE. 5 residues coordinate Ca(2+): D700, D702, D704, E706, and E711. Positions 708-732 are enriched in basic and acidic residues; that stretch reads TEHEHQQMRDDLEKEREDLDLEHSS. Disordered regions lie at residues 708 to 770 and 854 to 904; these read TEHE…SSGG and ESDD…PAHL. The segment at 740–759 is linker; it reads RSFSRSQDDSEEDDDEDSGH. One can recognise an EF-hand 2 domain in the interval 768–786; sequence SGGVSYEEFQVLVRRVDRM. Positions 770–809 form a coiled coil; sequence GVSYEEFQVLVRRVDRMEHSIGSIVSKIDAVIVKLEAMER. Over residues 878 to 890 the composition is skewed to low complexity; it reads LRPRSSRPPSSLS.

It belongs to the polycystin family. In terms of assembly, homotetramer. Component of the heterotetrameric polycystin channel complex with pkd1; the tetramer contains one pkd1 chain and three pkd2 chains. Interacts with pkd1l1. In terms of processing, phosphorylated. Phosphorylation is important for protein function; a mutant human construct that lacks the N-terminal phosphorylation sites cannot complement a zebrafish pkd2-deficient mutant. N-glycosylated. The four subunits in a tetramer probably differ in the extent of glycosylation; simultaneous glycosylation of all experimentally validated sites would probably create steric hindrance. Post-translationally, sumoylated by SUMO1; sumoylation regulates PKD2 membrane recycling. In terms of tissue distribution, detected along cilia and at the cilium basal body in Kupffer's vesicle at the 10 somite stage. Detected in heart at 48hpf. Detected in muscle and pronephric kidney at 48 hpf. Detected on trunk muscle sarcolemma and sarcomere, on ependymal cell cilia in brain, at the apical cell membrane in epithelial cells in the ear, at the lateral line organ and olfactory placode at 56 hpf. Detected in adult kidney (at protein level).

The protein resides in the basolateral cell membrane. The protein localises to the cell membrane. It is found in the sarcolemma. It localises to the cytoplasm. Its subcellular location is the myofibril. The protein resides in the sarcomere. The protein localises to the sarcoplasmic reticulum membrane. It is found in the apical cell membrane. It localises to the endoplasmic reticulum membrane. Its subcellular location is the cell projection. The protein resides in the cilium. The protein localises to the cytoskeleton. It is found in the cilium basal body. It localises to the cytoplasmic vesicle membrane. It catalyses the reaction K(+)(in) = K(+)(out). It carries out the reaction Na(+)(in) = Na(+)(out). The catalysed reaction is Ca(2+)(in) = Ca(2+)(out). Channel activity is regulated by phosphorylation. Channel activity is regulated by intracellular Ca(2+). In terms of biological role, forms a nonselective cation channel. Can function as a homotetrameric ion channel or can form heteromer with PKD1. Displays distinct function depending on its subcellular localization and regulation by its binding partners. In the primary cilium functions as a cation channel, with a preference for monovalent cations over divalent cations that allows K(+), Na(+) and Ca(2+) influx, with low selectivity for Ca(2+). In the endoplasmic reticulum, likely functions as a K(+) channel to facilitate Ca(2+) release. Required for normal oscillation of Ca(2+) levels within cilia; these oscillations of the intraciliary Ca(2+) levels can trigger cytoplasmic Ca(2+) signaling cascades. Required for normal temporal variation of the intracellular Ca(2+) levels in the heart. Plays a role in fluid-flow mechanosensation. Required for normal specification of the body left-right axis during embryogenesis, most likely via its role in ciliary Ca(2+) oscillations in Kupffer's vesicle. The protein is Polycystin-2 of Danio rerio (Zebrafish).